Here is a 364-residue protein sequence, read N- to C-terminus: Anthranilate phosphoribosyltransferase (364 aa).

5-phospho-alpha-D-ribose 1-diphosphate contacts are provided by residues G101, 104 to 105 (GD), T109, 111 to 114 (NLST), 129 to 137 (KHGNRAASS), and G141. G101 serves as a coordination point for anthranilate. S113 is a Mg(2+) binding site. N132 lines the anthranilate pocket. Residue R187 coordinates anthranilate. 2 residues coordinate Mg(2+): D245 and E246.

The protein belongs to the anthranilate phosphoribosyltransferase family. In terms of assembly, homodimer. The cofactor is Mg(2+).

The catalysed reaction is N-(5-phospho-beta-D-ribosyl)anthranilate + diphosphate = 5-phospho-alpha-D-ribose 1-diphosphate + anthranilate. It participates in amino-acid biosynthesis; L-tryptophan biosynthesis; L-tryptophan from chorismate: step 2/5. Its function is as follows. Catalyzes the transfer of the phosphoribosyl group of 5-phosphorylribose-1-pyrophosphate (PRPP) to anthranilate to yield N-(5'-phosphoribosyl)-anthranilate (PRA). This Mycolicibacterium gilvum (strain PYR-GCK) (Mycobacterium gilvum (strain PYR-GCK)) protein is Anthranilate phosphoribosyltransferase.